Reading from the N-terminus, the 437-residue chain is Na(+)/H(+) antiporter NhaA (437 aa).

Helical transmembrane passes span 29–49 (TAGIILLLSTLLALGLANTAW), 74–94 (LKHWINDGLMTFFFFVIALEL), 111–131 (LPVAAALGGMAAPAGIYLLLV), 139–159 (GWGTVMSTDTAFVIGCLALLG), 168–188 (LFLLSLAIFDDIGAILIVAVG), 196–216 (VALGTGGLGFAFVAGIALLGI), 229–249 (IWLAFDASGVHATLVGVILGL), 307–327 (IALHPWVAFAIMPLFAVSNAG), 341–361 (IAIVVAFVVGKPAGIVLFSFL), 376–396 (WSLLAAGSLLTGIGFTMALFI), and 411–431 (LGVLGASVISAALGFMALTLL).

This sequence belongs to the NhaA Na(+)/H(+) (TC 2.A.33) antiporter family.

It localises to the cell inner membrane. It carries out the reaction Na(+)(in) + 2 H(+)(out) = Na(+)(out) + 2 H(+)(in). In terms of biological role, na(+)/H(+) antiporter that extrudes sodium in exchange for external protons. In Rhizobium meliloti (strain 1021) (Ensifer meliloti), this protein is Na(+)/H(+) antiporter NhaA.